A 727-amino-acid chain; its full sequence is MNRKILKLENLLRFHTICRQLHSLCQRRMLAQWRHMFSSAYAVHTAQLYTRPWQTDALLRAALSQRRLLVTKKEKRSQKSPLPSTKSKKEVEVWLGMTVEELARAMEKDIDCVYESLMNTAIDIDSLETHSRLDEVWIKEVIKKSGMKLKWSKLKQDKVRENKDAVKRPQADPALLIPRSPVVTIMGHVDHGKTTLLDKLRKTQVAAMEAGGITQHIGAFLVSLPSGEKITFLDTPGHAAFSAMRARGTQVTDIVILVVAADDGVMKQTVESIQHAKDAHVPIVLAINKCDKAEADPEKVKKELLAYDVVCEDYGGDVQAVHVSALTGENMMALAEATIALAEMLELKADPTGAVEGTVIESFTDKGRGPVTTAIIQRGTLRKGSILVAGKSWAKVRLMFDENGRAVNEAYPSMPVGIIGWRDLPSAGDEILEVESEPRAREVVDWRKYEQEQEKNKEDLKLIEEKRKEHQEAHRKDREKYGTVHWKERSYIKYREKRQQQPLKPKEKLERDSNVLPVIVKGDVDGSVEAILNVMDTYDASHECELDLVHFGVGDISENDVNLAETFHGVIYGFNVNAGNVIQQLAAKKGVKIKLHKIIYRLIEDLQEELSSRLPCIVEEHPIGEASILATFSITEGKKKVPVAGCRVQKGQIEKQKKFKLIRNGHVIWKGSLISLKHHKDDTSVVKTGMDCGLSLDEEKIEFKVGDAIICYEEKEVPAKTSWDPGF.

Residues 1 to 29 constitute a mitochondrion transit peptide; the sequence is MNRKILKLENLLRFHTICRQLHSLCQRRM. The region spanning 178 to 348 is the tr-type G domain; that stretch reads PRSPVVTIMG…IALAEMLELK (171 aa). A G1 region spans residues 187 to 194; the sequence is GHVDHGKT. 187–194 contributes to the GTP binding site; the sequence is GHVDHGKT. Positions 212 to 216 are G2; sequence GITQH. Residues 234 to 237 and 288 to 291 contribute to the GTP site; these read DTPG and NKCD. The interval 234 to 237 is G3; sequence DTPG. A G4 region spans residues 288 to 291; the sequence is NKCD. The interval 324–326 is G5; sequence SAL. Residue Thr-688 is modified to Phosphothreonine.

This sequence belongs to the TRAFAC class translation factor GTPase superfamily. Classic translation factor GTPase family. IF-2 subfamily. Monomer.

The protein resides in the mitochondrion. Functionally, one of the essential components for the initiation of protein synthesis. Protects formylmethionyl-tRNA from spontaneous hydrolysis and promotes its binding to the 30S ribosomal subunits. Also involved in the hydrolysis of GTP during the formation of the 70S ribosomal complex. This chain is Translation initiation factor IF-2, mitochondrial (MTIF2), found in Bos taurus (Bovine).